Here is a 522-residue protein sequence, read N- to C-terminus: uncharacterized protein (522 aa).

Residues Met1 to Arg11 show a composition bias toward low complexity. A disordered region spans residues Met1–Lys20. A run of 12 helical transmembrane segments spans residues Val69–Tyr89, Ser116–Met136, Leu141–Ala161, Phe173–Trp193, Leu204–Leu224, Tyr236–Pro256, Val303–Ser323, Ala338–Leu358, Leu367–Ile387, Leu396–Ile416, Val428–Phe448, and Ala462–Ile482.

Belongs to the major facilitator superfamily. Allantoate permease family.

Its subcellular location is the endoplasmic reticulum. The protein resides in the membrane. This is an uncharacterized protein from Schizosaccharomyces pombe (strain 972 / ATCC 24843) (Fission yeast).